A 333-amino-acid polypeptide reads, in one-letter code: Autoinducer 2 import system permease protein LsrD (333 aa).

Helical transmembrane passes span Tyr-7 to Ala-27, Ile-45 to Ile-65, Thr-70 to Ala-90, Ala-91 to Leu-111, Leu-118 to Ile-138, Leu-162 to Phe-182, Thr-212 to Val-232, Ser-240 to Asn-260, Ile-261 to Leu-281, and Ala-288 to Val-308.

Belongs to the binding-protein-dependent transport system permease family. AraH/RbsC subfamily. In terms of assembly, the complex is composed of two ATP-binding proteins (LsrA), two transmembrane proteins (LsrC and LsrD) and a solute-binding protein (LsrB).

It localises to the cell inner membrane. Its function is as follows. Part of the ABC transporter complex LsrABCD involved in autoinducer 2 (AI-2) import. Probably responsible for the translocation of the substrate across the membrane. This Photorhabdus luminescens (Xenorhabdus luminescens) protein is Autoinducer 2 import system permease protein LsrD (lsrD).